The following is a 46-amino-acid chain: Photosystem II reaction center protein K (46 aa).

Positions 1–9 (MLILFNTFA) are excised as a propeptide. A helical membrane pass occupies residues 25-45 (LPLIPLFFFLLVFVWQAAVGF).

Belongs to the PsbK family. In terms of assembly, PSII is composed of 1 copy each of membrane proteins PsbA, PsbB, PsbC, PsbD, PsbE, PsbF, PsbH, PsbI, PsbJ, PsbK, PsbL, PsbM, PsbT, PsbX, PsbY, Psb30/Ycf12, peripheral proteins PsbO, CyanoQ (PsbQ), PsbU, PsbV and a large number of cofactors. It forms dimeric complexes.

Its subcellular location is the cellular thylakoid membrane. Functionally, one of the components of the core complex of photosystem II (PSII). PSII is a light-driven water:plastoquinone oxidoreductase that uses light energy to abstract electrons from H(2)O, generating O(2) and a proton gradient subsequently used for ATP formation. It consists of a core antenna complex that captures photons, and an electron transfer chain that converts photonic excitation into a charge separation. This is Photosystem II reaction center protein K from Prochlorococcus marinus (strain MIT 9301).